A 187-amino-acid chain; its full sequence is UPF0340 protein SGO_0411 (187 aa).

This sequence belongs to the UPF0340 family.

The chain is UPF0340 protein SGO_0411 from Streptococcus gordonii (strain Challis / ATCC 35105 / BCRC 15272 / CH1 / DL1 / V288).